A 191-amino-acid polypeptide reads, in one-letter code: Ribonuclease HII (191 aa).

The RNase H type-2 domain occupies 16–191 (INLIGIDEAG…KLHRKSFKLL (176 aa)). A divalent metal cation contacts are provided by aspartate 22, glutamate 23, and aspartate 110.

Belongs to the RNase HII family. The cofactor is Mn(2+). It depends on Mg(2+) as a cofactor.

The protein localises to the cytoplasm. The enzyme catalyses Endonucleolytic cleavage to 5'-phosphomonoester.. In terms of biological role, endonuclease that specifically degrades the RNA of RNA-DNA hybrids. This Campylobacter jejuni subsp. doylei (strain ATCC BAA-1458 / RM4099 / 269.97) protein is Ribonuclease HII.